The primary structure comprises 485 residues: WD repeat-containing protein 13 (485 aa).

Position 1 is an N-acetylmethionine (M1). S70, S74, and S79 each carry phosphoserine. The residue at position 114 (R114) is an Asymmetric dimethylarginine; alternate. At R114 the chain carries Omega-N-methylarginine; alternate. WD repeat units follow at residues 162-202 (GMYH…LCQL), 208-246 (TVLRVLRGHTRGVSDFAWSLSNDILVSTSLDATMRIWAS), 250-290 (RCIR…VMNI), 295-335 (KVKG…LFDM), 341-389 (TKAK…VVDN), 394-438 (QLKR…FFDV), and 444-482 (AAVNKLQGHSAPVLDVSFNCDESLLASSDASGMVIVWRR).

Widely expressed.

The protein resides in the nucleus. In Homo sapiens (Human), this protein is WD repeat-containing protein 13 (WDR13).